The chain runs to 293 residues: NAD kinase (293 aa).

Asp-73 (proton acceptor) is an active-site residue. NAD(+)-binding positions include 73 to 74 (DG), 147 to 148 (NE), His-158, Arg-175, Asp-177, 188 to 193 (TAYSLS), and Gln-248.

This sequence belongs to the NAD kinase family. A divalent metal cation is required as a cofactor.

It localises to the cytoplasm. It catalyses the reaction NAD(+) + ATP = ADP + NADP(+) + H(+). In terms of biological role, involved in the regulation of the intracellular balance of NAD and NADP, and is a key enzyme in the biosynthesis of NADP. Catalyzes specifically the phosphorylation on 2'-hydroxyl of the adenosine moiety of NAD to yield NADP. This chain is NAD kinase, found in Photobacterium profundum (strain SS9).